Reading from the N-terminus, the 325-residue chain is uncharacterized protein (325 aa).

The segment at 296–325 (QRTLSSSMEEADRPRRMSVTQPHLPPVPSA) is disordered.

It belongs to the NDRG family.

This is an uncharacterized protein from Caenorhabditis elegans.